A 437-amino-acid polypeptide reads, in one-letter code: Leucine-rich repeat flightless-interacting protein 2 (437 aa).

S18 bears the Phosphoserine mark. Residues 22-49 (EALSNIAREAEARLAAKRAARAEARDIR) are a coiled coil. Residues 33–62 (ARLAAKRAARAEARDIRMRELERQQRESSS) show a composition bias toward basic and acidic residues. The tract at residues 33–152 (ARLAAKRAAR…DTSLSELRES (120 aa)) is disordered. Positions 63–74 (KDITGTHWSRAS) are enriched in polar residues. Residues 77 to 105 (KRRDMMYDSIKDRSSRVSSLLDEKSDKQY) show a composition bias toward basic and acidic residues. A compositionally biased stretch (polar residues) spans 110-139 (TRPSSRNSASATTPLSGNSSRRGSGDTSSL). S114, S117, S125, S129, and S133 each carry phosphoserine. T136 carries the phosphothreonine modification. Phosphoserine is present on residues S137 and S138. Coiled coils occupy residues 143–239 (DTSL…LIEK) and 282–430 (LDVR…KANR).

Belongs to the LRRFIP family. As to quaternary structure, interacts with DVL3 and FLII. Weakly interacts with MYD88 in resting cells. Following LPS-stimulation, the interaction with MYD88 is rapidly enhanced; the complex gradually dissociates to basal levels after 6 hours of stimulation. Interaction with MYD88 is regulated by LPS-induced phosphorylation. In the presence of LPS, competes with FLII for MYD88-binding.

In terms of biological role, may function as activator of the canonical Wnt signaling pathway, in association with DVL3, upstream of CTNNB1/beta-catenin. Positively regulates Toll-like receptor (TLR) signaling in response to agonist probably by competing with the negative FLII regulator for MYD88-binding. The polypeptide is Leucine-rich repeat flightless-interacting protein 2 (Lrrfip2) (Rattus norvegicus (Rat)).